A 228-amino-acid polypeptide reads, in one-letter code: Cytochrome c oxidase subunit 2 (228 aa).

The Mitochondrial intermembrane segment spans residues 1–26; the sequence is MTTWANMNLQDSASPIMEQLIYFHDH. A helical transmembrane segment spans residues 27–48; the sequence is ALMIIIMILMVVSYMMIAMVFN. Residues 49-62 are Mitochondrial matrix-facing; sequence KYINRFLLEGQMIE. The chain crosses the membrane as a helical span at residues 63–82; the sequence is LAWTIAPAVILIFIAVPSLR. Residues 83-228 lie on the Mitochondrial intermembrane side of the membrane; that stretch reads LLYLMDEINT…FINWILKMNM (146 aa). Cu cation contacts are provided by H161, C196, E198, C200, H204, and M207. Mg(2+) is bound at residue E198.

Belongs to the cytochrome c oxidase subunit 2 family. As to quaternary structure, component of the cytochrome c oxidase (complex IV, CIV), a multisubunit enzyme composed of a catalytic core of 3 subunits and several supernumerary subunits. The complex exists as a monomer or a dimer and forms supercomplexes (SCs) in the inner mitochondrial membrane with ubiquinol-cytochrome c oxidoreductase (cytochrome b-c1 complex, complex III, CIII). It depends on Cu cation as a cofactor.

Its subcellular location is the mitochondrion inner membrane. The catalysed reaction is 4 Fe(II)-[cytochrome c] + O2 + 8 H(+)(in) = 4 Fe(III)-[cytochrome c] + 2 H2O + 4 H(+)(out). In terms of biological role, component of the cytochrome c oxidase, the last enzyme in the mitochondrial electron transport chain which drives oxidative phosphorylation. The respiratory chain contains 3 multisubunit complexes succinate dehydrogenase (complex II, CII), ubiquinol-cytochrome c oxidoreductase (cytochrome b-c1 complex, complex III, CIII) and cytochrome c oxidase (complex IV, CIV), that cooperate to transfer electrons derived from NADH and succinate to molecular oxygen, creating an electrochemical gradient over the inner membrane that drives transmembrane transport and the ATP synthase. Cytochrome c oxidase is the component of the respiratory chain that catalyzes the reduction of oxygen to water. Electrons originating from reduced cytochrome c in the intermembrane space (IMS) are transferred via the dinuclear copper A center (CU(A)) of subunit 2 and heme A of subunit 1 to the active site in subunit 1, a binuclear center (BNC) formed by heme A3 and copper B (CU(B)). The BNC reduces molecular oxygen to 2 water molecules using 4 electrons from cytochrome c in the IMS and 4 protons from the mitochondrial matrix. The chain is Cytochrome c oxidase subunit 2 (COII) from Periplaneta americana (American cockroach).